The following is an 83-amino-acid chain: SPbeta prophage-derived uncharacterized protein YopE (83 aa).

2 helical membrane-spanning segments follow: residues 5 to 25 and 60 to 80; these read AYFLIIWLGVGLLTGIKFIFV and VIAFFMLIGLLPLAMRITKLF.

It localises to the cell membrane. In Bacillus subtilis (strain 168), this protein is SPbeta prophage-derived uncharacterized protein YopE (yopE).